A 217-amino-acid polypeptide reads, in one-letter code: D-methionine transport system permease protein MetI (217 aa).

Residues 1-19 (MSEPMMWLLVRGVWETLAM) are Periplasmic-facing. The ABC transmembrane type-1 domain occupies 13–204 (VWETLAMTFV…LLVILVYLIQ (192 aa)). Residues 20 to 40 (TFVSGFFGFVIGLPVGVLLYV) form a helical membrane-spanning segment. The Cytoplasmic segment spans residues 41 to 57 (TRPGQIIANAKLYRTVS). A helical membrane pass occupies residues 58–78 (AIVNIFRSIPFIILLVWMIPF). Topologically, residues 79-80 (TR) are periplasmic. The chain crosses the membrane as a helical span at residues 81 to 101 (VIVGTSIGLQAAIVPLTVGAA). Residues 102–151 (PFIARMVENALLEIPTGLIEASRAMGATPMQIVRKVLLPEALPGLVNAAT) lie on the Cytoplasmic side of the membrane. A helical transmembrane segment spans residues 152-172 (ITLITLVGYSAMGGAVGAGGL). At 173–185 (GQIGYQYGYIGYN) the chain is on the periplasmic side. The helical transmembrane segment at 186 to 206 (ATVMNTVLVLLVILVYLIQFA) threads the bilayer. Residues 207 to 217 (GDRIVRAVTRK) lie on the Cytoplasmic side of the membrane.

The protein belongs to the binding-protein-dependent transport system permease family. CysTW subfamily.

Its subcellular location is the cell inner membrane. Part of the binding-protein-dependent transport system for D-methionine and the toxic methionine analog alpha-methyl-methionine. Probably responsible for the translocation of the substrate across the membrane. In terms of biological role, (Microbial infection) Probably transports the toxic C-terminal region of CdiA from E.coli strain MHI813 across the inner membrane to the cytoplasm, where CdiA has a toxic effect. Toxin transport is strain-specific, mutations in this gene do not confer resistance to several other tested CdiA toxins. The polypeptide is D-methionine transport system permease protein MetI (metI) (Escherichia coli (strain K12)).